Here is a 369-residue protein sequence, read N- to C-terminus: Delta(6)-protoilludene synthase STEHIDRAFT_73029 (369 aa).

The Mg(2+) site is built by Asp-107, Asn-243, Ser-247, and Glu-251. The short motif at 107 to 111 is the D(D/E)XX(D/E) motif element; it reads DEYSD. The NSE motif signature appears at 243–251; sequence NDIVSYNLE. Residues Arg-333 and Tyr-334 each coordinate (2E,6E)-farnesyl diphosphate.

It belongs to the terpene synthase family. Mg(2+) serves as cofactor. Mn(2+) is required as a cofactor. Requires Ca(2+) as cofactor. The cofactor is Ni(2+). It depends on Co(2+) as a cofactor.

The enzyme catalyses (2E,6E)-farnesyl diphosphate = Delta(6)-protoilludene + diphosphate. The catalysed reaction is (2E,6E)-farnesyl diphosphate = alpha-selinene + diphosphate. Its activity is regulated as follows. Ca(2+) switches the cyclization mechanism of delta(6)-protoilludene synthase from 1,11 to 1,10 cyclization which leads to the production of beta-elemene. Its function is as follows. Terpene cyclase that catalyzes the cyclization of farnesyl diphosphate (FPP) to delta(6)-protoilludene. In presence of Ca(2+), a significant switch from 1,11 to a dual 1,11/1,10 cyclization occurs, producing beta-elemene as the major product, with lower levels of delta(6)-protoilludene and (E)-beta-caryophyllene, and traces of beta-selinene and alpha-selinene. The polypeptide is Delta(6)-protoilludene synthase STEHIDRAFT_73029 (Stereum hirsutum (strain FP-91666) (White-rot fungus)).